We begin with the raw amino-acid sequence, 657 residues long: Transketolase (657 aa).

H31 serves as a coordination point for substrate. Residues H71 and 120 to 122 contribute to the thiamine diphosphate site; that span reads GPL. D158 serves as a coordination point for Mg(2+). 2 residues coordinate thiamine diphosphate: G159 and N188. N188 and I190 together coordinate Mg(2+). The substrate site is built by H262, R354, and S381. H262 is a thiamine diphosphate binding site. The Proton donor role is filled by E408. Thiamine diphosphate is bound at residue F434. Substrate-binding residues include H458, D466, and R517.

The protein belongs to the transketolase family. Homodimer. The cofactor is Mg(2+). Requires Ca(2+) as cofactor. Mn(2+) is required as a cofactor. Co(2+) serves as cofactor. It depends on thiamine diphosphate as a cofactor.

The enzyme catalyses D-sedoheptulose 7-phosphate + D-glyceraldehyde 3-phosphate = aldehydo-D-ribose 5-phosphate + D-xylulose 5-phosphate. The protein operates within carbohydrate biosynthesis; Calvin cycle. It functions in the pathway carbohydrate degradation; pentose phosphate pathway. In terms of biological role, catalyzes the transfer of a two-carbon ketol group from a ketose donor to an aldose acceptor, via a covalent intermediate with the cofactor thiamine pyrophosphate. The protein is Transketolase (tklB) of Cereibacter sphaeroides (Rhodobacter sphaeroides).